The chain runs to 273 residues: NH(3)-dependent NAD(+) synthetase (273 aa).

46 to 53 (GISGGQDS) is a binding site for ATP. Asp-52 serves as a coordination point for Mg(2+). Arg-139 contacts deamido-NAD(+). Thr-159 is a binding site for ATP. Glu-164 is a binding site for Mg(2+). Lys-172 and Asp-179 together coordinate deamido-NAD(+). Residues Lys-188 and Thr-210 each contribute to the ATP site. 259 to 260 (HK) is a deamido-NAD(+) binding site.

It belongs to the NAD synthetase family. Homodimer.

It catalyses the reaction deamido-NAD(+) + NH4(+) + ATP = AMP + diphosphate + NAD(+) + H(+). Its pathway is cofactor biosynthesis; NAD(+) biosynthesis; NAD(+) from deamido-NAD(+) (ammonia route): step 1/1. Functionally, catalyzes the ATP-dependent amidation of deamido-NAD to form NAD. Uses ammonia as a nitrogen source. The sequence is that of NH(3)-dependent NAD(+) synthetase from Streptococcus thermophilus (strain ATCC BAA-250 / LMG 18311).